The sequence spans 225 residues: UPF0758 protein Shal_0429 (225 aa).

Positions 102 to 224 (ILSDPDLTRD…IVSFAERGWI (123 aa)) constitute an MPN domain. 3 residues coordinate Zn(2+): histidine 173, histidine 175, and aspartate 186. The short motif at 173 to 186 (HNHPSGIAEPSTAD) is the JAMM motif element.

It belongs to the UPF0758 family.

The sequence is that of UPF0758 protein Shal_0429 from Shewanella halifaxensis (strain HAW-EB4).